Reading from the N-terminus, the 827-residue chain is Histone acetyltransferase MOF (827 aa).

Disordered stretches follow at residues methionine 1–valine 190, glutamine 237–leucine 276, serine 288–proline 309, and glutamate 324–glutamate 360. Over residues proline 19–proline 30 the composition is skewed to acidic residues. Residues leucine 55–aspartate 69 show a composition bias toward polar residues. Residues serine 103–serine 116 show a composition bias toward low complexity. Residues valine 121–proline 133 are compositionally biased toward acidic residues. The segment covering glutamine 141–aspartate 150 has biased composition (basic and acidic residues). The segment covering aspartate 176–serine 186 has biased composition (acidic residues). Residues alanine 243–alanine 253 are compositionally biased toward pro residues. Acidic residues predominate over residues isoleucine 326–leucine 350. Lysine 372 participates in a covalent cross-link: Glycyl lysine isopeptide (Lys-Gly) (interchain with G-Cter in ubiquitin). The region spanning isoleucine 382–serine 433 is the Tudor-knot domain. Residues lysine 483, lysine 532, and lysine 539 each participate in a glycyl lysine isopeptide (Lys-Gly) (interchain with G-Cter in ubiquitin) cross-link. The 276-residue stretch at threonine 538–proline 813 folds into the MYST-type HAT domain. Residues leucine 571 to arginine 596 form a C2HC MYST-type zinc finger. Cysteine 574, cysteine 577, histidine 590, and cysteine 594 together coordinate Zn(2+). Lysine 638 is modified (N6-acetyllysine; by autocatalysis). Residues isoleucine 681, arginine 689, lysine 690, glycine 691, glycine 693, and lysine 694 each coordinate acetyl-CoA. The active-site Proton donor/acceptor is glutamate 714. A Glycyl lysine isopeptide (Lys-Gly) (interchain with G-Cter in ubiquitin) cross-link involves residue lysine 715. Acetyl-CoA contacts are provided by serine 718 and serine 727. Lysine 749 participates in a covalent cross-link: Glycyl lysine isopeptide (Lys-Gly) (interchain with G-Cter in ubiquitin). Acetyl-CoA is bound at residue tyrosine 774. Residues lysine 776, lysine 798, and lysine 801 each participate in a glycyl lysine isopeptide (Lys-Gly) (interchain with G-Cter in ubiquitin) cross-link. Lysine 798 contributes to the acetyl-CoA binding site.

It belongs to the MYST (SAS/MOZ) family. Component of the male-specific lethal (MSL) histone acetyltransferase complex, composed of mof, mle, msl-1, msl-2 and msl-3 proteins, as well as roX1 and roX2 non-coding RNAs. Component of a maternal MSL subcomplex composed of mof, msl-1 and msl-3. Component of the non-specific lethal (NLS) histone acetyltransferase complex at least composed of mof, nls1, dgt1/NSL2, Rcd1/NSL3, Rcd5/MCRS2, MBD-R2 and wds. In males, interacts with nucleoporin Mgtor. Post-translationally, autoacetylation at Lys-638 is required for binding histone H4 with high affinity and for proper function. In terms of processing, ubiquitinated by msl-2.

It localises to the nucleus. It is found in the chromosome. The enzyme catalyses L-lysyl-[histone] + acetyl-CoA = N(6)-acetyl-L-lysyl-[histone] + CoA + H(+). Histone acetyltransferase that catalyzes the formation of the majority of histone H4 acetylation at 'Lys-16' (H4K16ac), an epigenetic mark that prevents chromatin compaction and constitutes the only acetylation mark intergenerationally transmitted. Catalytic component of the male-specific lethal (MSL) complex, a multiprotein complex essential for elevating transcription of the single X chromosome in the male (X chromosome dosage compensation). The MSL complex specifically associates with the single X chromosome in males and mediates formation of H4K16ac, promoting a two-fold activation of X chromosome. Dosage compensation ensures that males with a single X chromosome have the same amount of most X-linked gene products as females with two X chromosomes. In oocytes, mof is also part of a maternal MSL subcomplex that mediates H4K16ac deposition for intergenerational transmission: H4K16ac prepares the chromatin landscape for establishment of nucleosome accessibility and poises genes for future activation. H4K16ac constitutes the only acetylation mark maintained from oocytes to fertilized embryos. Mof also constitutes the catalytic component of the non-specific lethal (NLS) complex, which promotes expression of housekeeping genes on X chromosome and autosomes. The NSL complex promotes strong expression of housekeeping genes compared to the two-fold expression mediated by the MSL complex on X chromosome, suggesting that the activation potential of mof is constrained in the context of dosage compensation. The sequence is that of Histone acetyltransferase MOF from Drosophila melanogaster (Fruit fly).